Here is a 134-residue protein sequence, read N- to C-terminus: Nif-regulating protein A (134 aa).

The C4-type; atypical zinc-finger motif lies at 3-36; the sequence is CLECGLVYIVSGLKVPEKISVRVFVNRIEHPFTH.

Interacts with the general archaeal transcription factors TBPs.

Involved in nitrogen regulation. Enhances the transcription of the nitrogen fixation (nif) operon under nitrogen-limited conditions. Acts by binding to the nifH promoter region. This chain is Nif-regulating protein A, found in Methanosarcina mazei (strain ATCC BAA-159 / DSM 3647 / Goe1 / Go1 / JCM 11833 / OCM 88) (Methanosarcina frisia).